Reading from the N-terminus, the 454-residue chain is Butyrophilin-like protein 2 (454 aa).

Residues 1-6 (MVDCPR) are Cytoplasmic-facing. The helical; Signal-anchor for type II membrane protein transmembrane segment at 7 to 23 (YSLSGVAASFLFVLLTI) threads the bilayer. The Extracellular segment spans residues 24–454 (KHPDDFRVVG…KTARFPLSGW (431 aa)). Ig-like V-type domains lie at 27–140 (DDFR…VLLQ), 148–234 (PNIH…ATIA), 244–355 (ASVS…ARVD), and 365–452 (PRIT…FPLS). 4 disulfide bridges follow: Cys-50–Cys-124, Cys-164–Cys-218, Cys-267–Cys-341, and Cys-381–Cys-435. N-linked (GlcNAc...) asparagine glycosylation is found at Asn-210, Asn-296, Asn-427, and Asn-432.

The protein belongs to the immunoglobulin superfamily. BTN/MOG family. Highly expressed in intestine and at reduced levels in lung and stomach. Also expressed in thymus, spleen, lymph nodes, T-cells, B-cells, and macrophages.

It localises to the membrane. Functionally, negative regulator of T-cell proliferation. In Mus musculus (Mouse), this protein is Butyrophilin-like protein 2.